A 423-amino-acid polypeptide reads, in one-letter code: Lipase member M (423 aa).

An N-terminal signal peptide occupies residues 1-33 (MLETLSRQWIVSHRMEMWLLILVAYMFQRNVNS). Asn48 is a glycosylation site (N-linked (GlcNAc...) asparagine). Residues 92-392 (PVVLLQHGLV…EWAHVDFIWG (301 aa)) form the AB hydrolase-1 domain. Ser186 acts as the Nucleophile in catalysis. Cys260 and Cys269 are joined by a disulfide. Catalysis depends on charge relay system residues Asp357 and His386.

It belongs to the AB hydrolase superfamily. Lipase family. As to expression, exclusively expressed in the epidermis within the granular keratinocytes.

It is found in the secreted. Its function is as follows. Plays a highly specific role in the last step of keratinocyte differentiation. May have an essential function in lipid metabolism of the most differentiated epidermal layers. The protein is Lipase member M (LIPM) of Homo sapiens (Human).